The following is a 465-amino-acid chain: Neuraminidase (465 aa).

The Intravirion portion of the chain corresponds to 1 to 11 (MLPSTIQTLTL). A helical membrane pass occupies residues 12 to 34 (FLTSGGVLLSLYVSASLSYLLYS). The tract at residues 13 to 35 (LTSGGVLLSLYVSASLSYLLYSD) is involved in apical transport and lipid raft association. The Virion surface segment spans residues 35-465 (DILLKFSPKI…DTVTGVDMAL (431 aa)). Residues 38–85 (LKFSPKITAPTMTLDCTNASNVQAVNRSATKEMTFLLPEPEWTYPRLS) form a hypervariable stalk region region. N-linked (GlcNAc...) asparagine; by host glycosylation is found at Asn-55 and Asn-63. 8 disulfides stabilise this stretch: Cys-86/Cys-419, Cys-121/Cys-126, Cys-181/Cys-228, Cys-230/Cys-235, Cys-276/Cys-290, Cys-278/Cys-288, Cys-317/Cys-336, and Cys-423/Cys-446. The interval 88–465 (GSTFQKALLI…DTVTGVDMAL (378 aa)) is head of neuraminidase. Arg-115 lines the substrate pocket. Asn-143 carries an N-linked (GlcNAc...) asparagine; by host glycan. Asp-148 serves as the catalytic Proton donor/acceptor. Arg-149 provides a ligand contact to substrate. A substrate-binding site is contributed by 274–275 (EE). N-linked (GlcNAc...) asparagine; by host glycosylation occurs at Asn-283. Arg-291 contributes to the substrate binding site. Asp-292 lines the Ca(2+) pocket. Residue Asn-294 is glycosylated (N-linked (GlcNAc...) asparagine; by host). Asp-323 contacts Ca(2+). Arg-373 lines the substrate pocket. Tyr-408 serves as the catalytic Nucleophile.

This sequence belongs to the glycosyl hydrolase 34 family. As to quaternary structure, homotetramer. Ca(2+) serves as cofactor. Post-translationally, N-glycosylated.

It localises to the virion membrane. The protein resides in the host apical cell membrane. The enzyme catalyses Hydrolysis of alpha-(2-&gt;3)-, alpha-(2-&gt;6)-, alpha-(2-&gt;8)- glycosidic linkages of terminal sialic acid residues in oligosaccharides, glycoproteins, glycolipids, colominic acid and synthetic substrates.. Its activity is regulated as follows. Inhibited by the neuraminidase inhibitors zanamivir (Relenza) and oseltamivir (Tamiflu). These drugs interfere with the release of progeny virus from infected cells and are effective against all influenza strains. Resistance to neuraminidase inhibitors is quite rare. Its function is as follows. Catalyzes the removal of terminal sialic acid residues from viral and cellular glycoconjugates. Cleaves off the terminal sialic acids on the glycosylated HA during virus budding to facilitate virus release. Additionally helps virus spread through the circulation by further removing sialic acids from the cell surface. These cleavages prevent self-aggregation and ensure the efficient spread of the progeny virus from cell to cell. Otherwise, infection would be limited to one round of replication. Described as a receptor-destroying enzyme because it cleaves a terminal sialic acid from the cellular receptors. May facilitate viral invasion of the upper airways by cleaving the sialic acid moieties on the mucin of the airway epithelial cells. Likely to plays a role in the budding process through its association with lipid rafts during intracellular transport. May additionally display a raft-association independent effect on budding. Plays a role in the determination of host range restriction on replication and virulence. Sialidase activity in late endosome/lysosome traffic seems to enhance virus replication. In Influenza B virus (strain B/Victoria/3/1985), this protein is Neuraminidase.